The sequence spans 247 residues: 2,3-bisphosphoglycerate-dependent phosphoglycerate mutase (247 aa).

Substrate-binding positions include 8 to 15 (RHGESTWN), 21 to 22 (TG), R60, 87 to 90 (ERHY), K98, 114 to 115 (RR), and 183 to 184 (GN). The active-site Tele-phosphohistidine intermediate is H9. E87 functions as the Proton donor/acceptor in the catalytic mechanism.

The protein belongs to the phosphoglycerate mutase family. BPG-dependent PGAM subfamily. In terms of assembly, homodimer.

It carries out the reaction (2R)-2-phosphoglycerate = (2R)-3-phosphoglycerate. Its pathway is carbohydrate degradation; glycolysis; pyruvate from D-glyceraldehyde 3-phosphate: step 3/5. Functionally, catalyzes the interconversion of 2-phosphoglycerate and 3-phosphoglycerate. The protein is 2,3-bisphosphoglycerate-dependent phosphoglycerate mutase of Albidiferax ferrireducens (strain ATCC BAA-621 / DSM 15236 / T118) (Rhodoferax ferrireducens).